Consider the following 273-residue polypeptide: Dermonecrotic toxin LhSicTox-alphaIA2avi (273 aa).

Residue His5 is part of the active site. Mg(2+) contacts are provided by Glu25 and Asp27. His41 serves as the catalytic Nucleophile. 2 cysteine pairs are disulfide-bonded: Cys45–Cys51 and Cys47–Cys190. Position 85 (Asp85) interacts with Mg(2+).

It belongs to the arthropod phospholipase D family. Class II subfamily. It depends on Mg(2+) as a cofactor. Expressed by the venom gland.

Its subcellular location is the secreted. The catalysed reaction is an N-(acyl)-sphingosylphosphocholine = an N-(acyl)-sphingosyl-1,3-cyclic phosphate + choline. It carries out the reaction an N-(acyl)-sphingosylphosphoethanolamine = an N-(acyl)-sphingosyl-1,3-cyclic phosphate + ethanolamine. The enzyme catalyses a 1-acyl-sn-glycero-3-phosphocholine = a 1-acyl-sn-glycero-2,3-cyclic phosphate + choline. It catalyses the reaction a 1-acyl-sn-glycero-3-phosphoethanolamine = a 1-acyl-sn-glycero-2,3-cyclic phosphate + ethanolamine. Dermonecrotic toxins cleave the phosphodiester linkage between the phosphate and headgroup of certain phospholipids (sphingolipid and lysolipid substrates), forming an alcohol (often choline) and a cyclic phosphate. This toxin acts on sphingomyelin (SM). It may also act on ceramide phosphoethanolamine (CPE), lysophosphatidylcholine (LPC) and lysophosphatidylethanolamine (LPE), but not on lysophosphatidylserine (LPS), and lysophosphatidylglycerol (LPG). It acts by transphosphatidylation, releasing exclusively cyclic phosphate products as second products. Induces dermonecrosis, hemolysis, increased vascular permeability, edema, inflammatory response, and platelet aggregation. The protein is Dermonecrotic toxin LhSicTox-alphaIA2avi of Loxosceles hirsuta (Recluse spider).